The chain runs to 219 residues: Thymidylate kinase (219 aa).

7–14 contributes to the ATP binding site; sequence GIDGAGKS.

This sequence belongs to the thymidylate kinase family.

It carries out the reaction dTMP + ATP = dTDP + ADP. Its function is as follows. Phosphorylation of dTMP to form dTDP in both de novo and salvage pathways of dTTP synthesis. The sequence is that of Thymidylate kinase from Chlorobium phaeobacteroides (strain DSM 266 / SMG 266 / 2430).